A 117-amino-acid polypeptide reads, in one-letter code: Large ribosomal subunit protein bL20c (117 aa).

Belongs to the bacterial ribosomal protein bL20 family.

Its subcellular location is the plastid. The protein resides in the chloroplast. Binds directly to 23S ribosomal RNA and is necessary for the in vitro assembly process of the 50S ribosomal subunit. It is not involved in the protein synthesizing functions of that subunit. The sequence is that of Large ribosomal subunit protein bL20c from Draba nemorosa (Woodland whitlowgrass).